A 328-amino-acid chain; its full sequence is tRNA dimethylallyltransferase (328 aa).

Position 19–26 (19–26) interacts with ATP; the sequence is GPTASGKT. 21 to 26 is a binding site for substrate; that stretch reads TASGKT. 3 interaction with substrate tRNA regions span residues 50–53, 174–178, and 257–262; these read DSAL, QRIQR, and RCVGYR.

This sequence belongs to the IPP transferase family. As to quaternary structure, monomer. Requires Mg(2+) as cofactor.

The enzyme catalyses adenosine(37) in tRNA + dimethylallyl diphosphate = N(6)-dimethylallyladenosine(37) in tRNA + diphosphate. Its function is as follows. Catalyzes the transfer of a dimethylallyl group onto the adenine at position 37 in tRNAs that read codons beginning with uridine, leading to the formation of N6-(dimethylallyl)adenosine (i(6)A). This Leptothrix cholodnii (strain ATCC 51168 / LMG 8142 / SP-6) (Leptothrix discophora (strain SP-6)) protein is tRNA dimethylallyltransferase.